Consider the following 496-residue polypeptide: E3 ubiquitin-protein ligase Hakai (496 aa).

Residues 35–60 (PNKIKPAPRPQRNMNRIPTKPQPGFD) form a disordered region. The segment at 104–144 (CDKCGLPIKIYGRMIPCKHVFCYDCALMHEKKADKLCPGTL) adopts an RING-type; degenerate zinc-finger fold. The interval 157–215 (CNDPVQRIEQCARGSLFMCSIVQGCKRTYLSQRDLQAHINHRHMRASKPTARPQPEPIH) is HYB domain. The C2H2-type zinc-finger motif lies at 173 to 199 (FMCSIVQGCKRTYLSQRDLQAHINHRH). Residues 304 to 314 (VPIQDDSNSGA) show a composition bias toward polar residues. Residues 304–496 (VPIQDDSNSG…DQARYRPYYQ (193 aa)) form a disordered region. Composition is skewed to pro residues over residues 350–360 (APPPPPPPPIS), 380–397 (GPPP…PPPG), and 407–430 (MNHP…PPHH). The segment covering 434–449 (SSMPQFNEDQGTLSPP) has biased composition (polar residues). Positions 464-483 (PRGPPPRMQGPPSQAPMPGP) are enriched in pro residues.

It belongs to the Hakai family. As to quaternary structure, homodimer. Interacts with tyrosine-phosphorylated SRC substrates. Component of the WMM complex, a N6-methyltransferase complex composed of a catalytic subcomplex, named MAC, and of an associated subcomplex, named MACOM. Component of the MACOM subcomplex.

The protein resides in the nucleus speckle. It is found in the nucleus. Its subcellular location is the nucleoplasm. The enzyme catalyses S-ubiquitinyl-[E2 ubiquitin-conjugating enzyme]-L-cysteine + [acceptor protein]-L-lysine = [E2 ubiquitin-conjugating enzyme]-L-cysteine + N(6)-ubiquitinyl-[acceptor protein]-L-lysine.. Its pathway is protein modification; protein ubiquitination. E3 ubiquitin-protein ligase that mediates ubiquitination of several tyrosine-phosphorylated Src substrates. Associated component of the WMM complex, a complex that mediates N6-methyladenosine (m6A) methylation of RNAs, a modification that plays a role in the efficiency of mRNA splicing and RNA processing. The protein is E3 ubiquitin-protein ligase Hakai of Xenopus laevis (African clawed frog).